The primary structure comprises 260 residues: DNA-directed RNA polymerase subunit Rpo3 (260 aa).

This sequence belongs to the archaeal Rpo3/eukaryotic RPB3 RNA polymerase subunit family. In terms of assembly, part of the RNA polymerase complex.

The protein resides in the cytoplasm. It catalyses the reaction RNA(n) + a ribonucleoside 5'-triphosphate = RNA(n+1) + diphosphate. DNA-dependent RNA polymerase (RNAP) catalyzes the transcription of DNA into RNA using the four ribonucleoside triphosphates as substrates. In Pyrobaculum aerophilum (strain ATCC 51768 / DSM 7523 / JCM 9630 / CIP 104966 / NBRC 100827 / IM2), this protein is DNA-directed RNA polymerase subunit Rpo3.